Consider the following 346-residue polypeptide: MDTGPDQSYFSGNHWFVFSVYLLTFLVGLPLNLLALVVFVGKLQRRPVAVDVLLLNLTASDLLLLLFLPFRMVEAANGMHWPLPFILCPLSGFIFFTTIYLTALFLAAVSIERFLSVAHPLWYKTRPRLGQAGLVSVACWLLASAHCSVVYVIEFSGDISHSQGTNGTCYLEFRKDQLAILLPVRLEMAVVLFVVPLIITSYCYSRLVWILGRGGSHRRQRRVAGLLAATLLNFLVCFGPYNVSHVVGYICGESPAWRIYVTLLSTLNSCVDPFVYYFSSSGFQADFHELLRRLCGLWGQWQQESSMELKEQKGGEEQRADRPAERKTSEHSQGCGTGGQVACAES.

At methionine 1–serine 19 the chain is on the extracellular side. A helical membrane pass occupies residues valine 20 to valine 40. At glycine 41–proline 47 the chain is on the cytoplasmic side. A helical membrane pass occupies residues valine 48–leucine 68. The Extracellular segment spans residues proline 69 to cysteine 88. Cysteine 88 and cysteine 169 are disulfide-bonded. A helical membrane pass occupies residues proline 89 to isoleucine 111. The Cytoplasmic segment spans residues glutamate 112–alanine 132. A helical membrane pass occupies residues glycine 133–isoleucine 153. Residues glutamate 154–leucine 178 lie on the Extracellular side of the membrane. A glycan (N-linked (GlcNAc...) asparagine) is linked at asparagine 166. The chain crosses the membrane as a helical span at residues alanine 179 to isoleucine 199. The Cytoplasmic segment spans residues threonine 200 to arginine 222. Residues valine 223–valine 243 form a helical membrane-spanning segment. The Extracellular segment spans residues serine 244–arginine 258. The helical transmembrane segment at isoleucine 259 to serine 279 threads the bilayer. Residues serine 280–serine 346 are Cytoplasmic-facing. A compositionally biased stretch (basic and acidic residues) spans methionine 307–glutamate 330. The disordered stretch occupies residues methionine 307 to serine 346.

This sequence belongs to the G-protein coupled receptor 1 family. In terms of tissue distribution, highest level in adipose tissue, and lower expression across all tissues tested. Expressed in sympathetic ganglia.

The protein localises to the cell membrane. Its function is as follows. G protein-coupled receptor that is activated by a major product of dietary fiber digestion, the short chain fatty acids (SCFAs), and that plays a role in the regulation of whole-body energy homeostasis and in intestinal immunity. In omnivorous mammals, the short chain fatty acids acetate, propionate and butyrate are produced primarily by the gut microbiome that metabolizes dietary fibers. SCFAs serve as a source of energy but also act as signaling molecules. That G protein-coupled receptor is probably coupled to the pertussis toxin-sensitive, G(i/o)-alpha family of G proteins. Its activation results in the formation of inositol 1,4,5-trisphosphate, the mobilization of intracellular calcium, the phosphorylation of the MAPK3/ERK1 and MAPK1/ERK2 kinases and the inhibition of intracellular cAMP accumulation. Activated by SCFAs and by beta-hydroxybutyrate, a ketone body produced by the liver upon starvation, it inhibits N-type calcium channels and modulates the activity of sympathetic neurons through a signaling cascade involving the beta and gamma subunits of its coupled G protein, phospholipase C and MAP kinases. Thereby, it may regulate energy expenditure through the control of the sympathetic nervous system that controls for instance heart rate. Upon activation by SCFAs accumulating in the intestine, it may also signal to the brain via neural circuits which in turn would regulate intestinal gluconeogenesis. May also control the production of hormones involved in whole-body energy homeostasis. May for instance, regulate blood pressure through renin secretion. May also regulate secretion of the PYY peptide by enteroendocrine cells and control gut motility, intestinal transit rate, and the harvesting of energy from SCFAs produced by gut microbiota. May also indirectly regulate the production of LEP/Leptin, a hormone acting on the CNS to inhibit food intake, in response to the presence of short-chain fatty acids in the intestine. Finally, may also play a role in glucose homeostasis. Besides its role in energy homeostasis, may play a role in intestinal immunity. May mediate the activation of the inflammatory and immune response by SCFAs in the gut, regulating the rapid production of chemokines and cytokines by intestinal epithelial cells. Among SCFAs, the fatty acids containing less than 6 carbons, the most potent activators are probably propionate, butyrate and pentanoate while acetate is a poor activator. In Homo sapiens (Human), this protein is Free fatty acid receptor 3 (FFAR3).